Consider the following 136-residue polypeptide: Protein NrdI (136 aa).

The protein belongs to the NrdI family.

Probably involved in ribonucleotide reductase function. This Erwinia tasmaniensis (strain DSM 17950 / CFBP 7177 / CIP 109463 / NCPPB 4357 / Et1/99) protein is Protein NrdI.